The chain runs to 184 residues: Ribosome-recycling factor (184 aa).

This sequence belongs to the RRF family.

It is found in the cytoplasm. Its function is as follows. Responsible for the release of ribosomes from messenger RNA at the termination of protein biosynthesis. May increase the efficiency of translation by recycling ribosomes from one round of translation to another. In Fervidobacterium nodosum (strain ATCC 35602 / DSM 5306 / Rt17-B1), this protein is Ribosome-recycling factor.